A 606-amino-acid polypeptide reads, in one-letter code: NADH-ubiquinone oxidoreductase chain 5 (606 aa).

15 helical membrane passes run 4 to 24 (FSSL…MMSL), 43 to 63 (AFIT…ELII), 87 to 107 (MMFT…SMWY), 117 to 137 (FFKY…ANNL), 140 to 160 (LFIG…WWYG), 171 to 191 (AVLY…WFLT), 213 to 233 (LIGL…HPWL), 241 to 261 (TPVS…FLLI), 272 to 292 (FIQS…AMCA), 310 to 330 (LGLM…LHIC), 366 to 386 (MPFT…MPFL), 413 to 433 (LIAT…ALLG), 457 to 477 (LLIG…PTTI), 482 to 502 (MPYY…ILAL), and 582 to 602 (GLIK…MMLF).

In terms of assembly, core subunit of respiratory chain NADH dehydrogenase (Complex I) which is composed of 45 different subunits.

Its subcellular location is the mitochondrion inner membrane. The catalysed reaction is a ubiquinone + NADH + 5 H(+)(in) = a ubiquinol + NAD(+) + 4 H(+)(out). In terms of biological role, core subunit of the mitochondrial membrane respiratory chain NADH dehydrogenase (Complex I) which catalyzes electron transfer from NADH through the respiratory chain, using ubiquinone as an electron acceptor. Essential for the catalytic activity and assembly of complex I. The sequence is that of NADH-ubiquinone oxidoreductase chain 5 (MT-ND5) from Bos indicus (Zebu).